The chain runs to 364 residues: tRNA 2-selenouridine synthase (364 aa).

Residues 14-137 (LIADTPIIDV…LRQTAIQATI (124 aa)) enclose the Rhodanese domain. Catalysis depends on Cys97, which acts as the S-selanylcysteine intermediate.

It belongs to the SelU family. In terms of assembly, monomer.

It catalyses the reaction 5-methylaminomethyl-2-thiouridine(34) in tRNA + selenophosphate + (2E)-geranyl diphosphate + H2O + H(+) = 5-methylaminomethyl-2-selenouridine(34) in tRNA + (2E)-thiogeraniol + phosphate + diphosphate. The enzyme catalyses 5-methylaminomethyl-2-thiouridine(34) in tRNA + (2E)-geranyl diphosphate = 5-methylaminomethyl-S-(2E)-geranyl-thiouridine(34) in tRNA + diphosphate. The catalysed reaction is 5-methylaminomethyl-S-(2E)-geranyl-thiouridine(34) in tRNA + selenophosphate + H(+) = 5-methylaminomethyl-2-(Se-phospho)selenouridine(34) in tRNA + (2E)-thiogeraniol. It carries out the reaction 5-methylaminomethyl-2-(Se-phospho)selenouridine(34) in tRNA + H2O = 5-methylaminomethyl-2-selenouridine(34) in tRNA + phosphate. Functionally, involved in the post-transcriptional modification of the uridine at the wobble position (U34) of tRNA(Lys), tRNA(Glu) and tRNA(Gln). Catalyzes the conversion of 2-thiouridine (S2U-RNA) to 2-selenouridine (Se2U-RNA). Acts in a two-step process involving geranylation of 2-thiouridine (S2U) to S-geranyl-2-thiouridine (geS2U) and subsequent selenation of the latter derivative to 2-selenouridine (Se2U) in the tRNA chain. This is tRNA 2-selenouridine synthase from Shigella boydii serotype 18 (strain CDC 3083-94 / BS512).